A 466-amino-acid chain; its full sequence is Cysteine--tRNA ligase (466 aa).

Cysteine 28 lines the Zn(2+) pocket. The short motif at 30–40 (PTVYNFFHIGN) is the 'HIGH' region element. 3 residues coordinate Zn(2+): cysteine 208, histidine 233, and glutamate 237. A 'KMSKS' region motif is present at residues 265–269 (KMSKS). Lysine 268 contributes to the ATP binding site.

It belongs to the class-I aminoacyl-tRNA synthetase family. Monomer. The cofactor is Zn(2+).

The protein localises to the cytoplasm. It catalyses the reaction tRNA(Cys) + L-cysteine + ATP = L-cysteinyl-tRNA(Cys) + AMP + diphosphate. The protein is Cysteine--tRNA ligase of Clostridium perfringens (strain ATCC 13124 / DSM 756 / JCM 1290 / NCIMB 6125 / NCTC 8237 / Type A).